A 666-amino-acid chain; its full sequence is tRNA 5-methylaminomethyl-2-thiouridine biosynthesis bifunctional protein MnmC (666 aa).

The segment at 1–253 (MSSPFVPIIT…KRHMICAHYE (253 aa)) is tRNA (mnm(5)s(2)U34)-methyltransferase. The tract at residues 283–666 (VGGGLAGCFI…FLRKKIIQGP (384 aa)) is FAD-dependent cmnm(5)s(2)U34 oxidoreductase.

This sequence in the N-terminal section; belongs to the methyltransferase superfamily. tRNA (mnm(5)s(2)U34)-methyltransferase family. It in the C-terminal section; belongs to the DAO family. It depends on FAD as a cofactor.

It localises to the cytoplasm. The catalysed reaction is 5-aminomethyl-2-thiouridine(34) in tRNA + S-adenosyl-L-methionine = 5-methylaminomethyl-2-thiouridine(34) in tRNA + S-adenosyl-L-homocysteine + H(+). Catalyzes the last two steps in the biosynthesis of 5-methylaminomethyl-2-thiouridine (mnm(5)s(2)U) at the wobble position (U34) in tRNA. Catalyzes the FAD-dependent demodification of cmnm(5)s(2)U34 to nm(5)s(2)U34, followed by the transfer of a methyl group from S-adenosyl-L-methionine to nm(5)s(2)U34, to form mnm(5)s(2)U34. This Legionella pneumophila subsp. pneumophila (strain Philadelphia 1 / ATCC 33152 / DSM 7513) protein is tRNA 5-methylaminomethyl-2-thiouridine biosynthesis bifunctional protein MnmC.